Here is a 103-residue protein sequence, read N- to C-terminus: Large ribosomal subunit protein uL24 (103 aa).

Belongs to the universal ribosomal protein uL24 family. In terms of assembly, part of the 50S ribosomal subunit.

Its function is as follows. One of two assembly initiator proteins, it binds directly to the 5'-end of the 23S rRNA, where it nucleates assembly of the 50S subunit. One of the proteins that surrounds the polypeptide exit tunnel on the outside of the subunit. In Actinobacillus succinogenes (strain ATCC 55618 / DSM 22257 / CCUG 43843 / 130Z), this protein is Large ribosomal subunit protein uL24.